We begin with the raw amino-acid sequence, 174 residues long: Protein COFACTOR ASSEMBLY OF COMPLEX C SUBUNIT B CCB3, chloroplastic (174 aa).

The N-terminal 39 residues, 1-39, are a transit peptide targeting the chloroplast; the sequence is MTTVTTSFVSFSPALMIFQKKSRRSSPNFRNRSTSLPIV. The Lumenal portion of the chain corresponds to 40–78; that stretch reads SATLSHIEEAATTTNLIRQTNSISESLRNISLADLDPGT. A helical transmembrane segment spans residues 79-99; it reads AKLAIGILGPALSAFGFLFIL. The Stromal segment spans residues 100–147; the sequence is RIVMSWYPKLPVDKFPYVLAYAPTEPILVQTRKVIPPLAGVDVTPVVW. Residues 148–168 traverse the membrane as a helical segment; sequence FGLVSFLSEILVGPQGLLVLV. Topologically, residues 169 to 174 are lumenal; sequence SQQQVN.

Belongs to the YggT family.

The protein resides in the plastid. Its subcellular location is the chloroplast thylakoid membrane. Required for the biogenesis and accumulation of native cytochrome b6 in the thylakoid membrane. Controls the conversion of apocytochrome b6 to holocytochrome b6. Required for covalent binding of the c-type heme to cytochrome b6. In Arabidopsis thaliana (Mouse-ear cress), this protein is Protein COFACTOR ASSEMBLY OF COMPLEX C SUBUNIT B CCB3, chloroplastic.